The primary structure comprises 424 residues: Interferon regulatory factor 8 (424 aa).

The IRF tryptophan pentad repeat DNA-binding region spans 7–114 (GRRLRQWLIE…EPYKVYRIVP (108 aa)).

The protein belongs to the IRF family. In terms of assembly, interacts with COPS2. Interacts (via C-terminus) with TRIM21 (via C-terminus). Interacts with the BATF-JUNB heterodimer. Interacts with BATF (via bZIP domain); the interaction is direct. Interacts with SPI1. In terms of processing, ubiquitinated. Ubiquitination by TRIM21 in macrophages, a process that is strongly increased upon interferon gamma stimulation, leds to the enhanced transcriptional activity of target cytokine genes. Ubiquitination leads to its degradation by the proteasome. Post-translationally, sumoylated with SUMO3. Desumoylated by SENP1. As to expression, expressed in bone marrow macrophages (at protein level). Mainly expressed in lymphoid tissues. Predominantly expressed in CD8(+)-expressing dendritic cells.

The protein resides in the nucleus. It is found in the cytoplasm. Transcription factor that specifically binds to the upstream regulatory region of type I interferon (IFN) and IFN-inducible MHC class I genes (the interferon consensus sequence (ICS)). Can both act as a transcriptional activator or repressor. Plays a negative regulatory role in cells of the immune system. Involved in CD8(+) dendritic cell differentiation by forming a complex with the BATF-JUNB heterodimer in immune cells, leading to recognition of AICE sequence (5'-TGAnTCA/GAAA-3'), an immune-specific regulatory element, followed by cooperative binding of BATF and IRF8 and activation of genes. Required for the development of plasmacytoid dendritic cells (pDCs), which produce most of the type I IFN in response to viral infection. Positively regulates macroautophagy in dendritic cells. Acts as a transcriptional repressor of osteoclast differentiation factors such as NFATC1 and EEIG1. This Mus musculus (Mouse) protein is Interferon regulatory factor 8.